The following is a 250-amino-acid chain: AA9 family lytic polysaccharide monooxygenase AA17 (250 aa).

Positions 1 to 21 are cleaved as a signal peptide; the sequence is MAMSKIVSLTGLLASASLVAG. Cu(2+) is bound by residues His22 and His107. 2 cysteine pairs are disulfide-bonded: Cys77/Cys199 and Cys118/Cys122. Asn159 is a glycosylation site (N-linked (GlcNAc...) asparagine). O2 is bound by residues His185 and Gln194. Tyr196 is a binding site for Cu(2+).

The protein belongs to the polysaccharide monooxygenase AA9 family. The cofactor is Cu(2+).

It is found in the secreted. Its function is as follows. Lytic polysaccharide monooxygenase (LPMO) that exhibits oxidative cleavage beta-O-4 linkage of lignin resulting in the formation of aromatic compound guaiacol. Catalysis by LPMOs requires the reduction of the active-site copper from Cu(II) to Cu(I) by a reducing agent and H(2)O(2) or O(2) as a cosubstrate. Does not use cellulose, cello-oligosaccharides, xyloglucan, xylan, chitin nor starch as substrates. Able to depolymerize the lignin dimer guaicyl glycerol beta-guaicyl ether (GGE). The polypeptide is AA9 family lytic polysaccharide monooxygenase AA17 (Aspergillus oryzae (strain ATCC 42149 / RIB 40) (Yellow koji mold)).